The primary structure comprises 491 residues: Stage IV sporulation protein A (491 aa).

The Walker A motif; involved in ATP-binding signature appears at 23–30; it reads GPVRTGKS. 23–30 contacts ATP; the sequence is GPVRTGKS. Residues 334–362 are a coiled coil; sequence QLLSLITRLSKVKNEYDKIESALIDAKIK.

Interacts (via Walker A motif) with SipL (via C-terminus LysM domain).

It localises to the cytoplasm. The catalysed reaction is ATP + H2O = ADP + phosphate + H(+). Functionally, ATPase. Has a role at an early stage in the morphogenesis of the spore coat and is required for proper coat localization to the forespore. This Clostridioides difficile (strain 630) (Peptoclostridium difficile) protein is Stage IV sporulation protein A.